The primary structure comprises 406 residues: Phosphopentomutase (406 aa).

Mn(2+) contacts are provided by D10, D305, H310, D346, H347, and H358.

This sequence belongs to the phosphopentomutase family. The cofactor is Mn(2+).

It is found in the cytoplasm. It catalyses the reaction 2-deoxy-alpha-D-ribose 1-phosphate = 2-deoxy-D-ribose 5-phosphate. It carries out the reaction alpha-D-ribose 1-phosphate = D-ribose 5-phosphate. It participates in carbohydrate degradation; 2-deoxy-D-ribose 1-phosphate degradation; D-glyceraldehyde 3-phosphate and acetaldehyde from 2-deoxy-alpha-D-ribose 1-phosphate: step 1/2. Isomerase that catalyzes the conversion of deoxy-ribose 1-phosphate (dRib-1-P) and ribose 1-phosphate (Rib-1-P) to deoxy-ribose 5-phosphate (dRib-5-P) and ribose 5-phosphate (Rib-5-P), respectively. In Rhizobium leguminosarum bv. trifolii (strain WSM2304), this protein is Phosphopentomutase.